The primary structure comprises 383 residues: Protein RecA (383 aa).

Residue 79–86 (GPESSGKT) coordinates ATP.

The protein belongs to the RecA family.

The protein resides in the cytoplasm. Can catalyze the hydrolysis of ATP in the presence of single-stranded DNA, the ATP-dependent uptake of single-stranded DNA by duplex DNA, and the ATP-dependent hybridization of homologous single-stranded DNAs. It interacts with LexA causing its activation and leading to its autocatalytic cleavage. The sequence is that of Protein RecA from Streptococcus gordonii (strain Challis / ATCC 35105 / BCRC 15272 / CH1 / DL1 / V288).